The sequence spans 148 residues: Large ribosomal subunit protein bL9 (148 aa).

The protein belongs to the bacterial ribosomal protein bL9 family.

Its function is as follows. Binds to the 23S rRNA. In Desulfitobacterium hafniense (strain DSM 10664 / DCB-2), this protein is Large ribosomal subunit protein bL9.